Consider the following 334-residue polypeptide: Small ribosomal subunit protein uS2 (334 aa).

This sequence belongs to the universal ribosomal protein uS2 family.

The protein is Small ribosomal subunit protein uS2 of Rhodopseudomonas palustris (strain BisB18).